We begin with the raw amino-acid sequence, 519 residues long: Putative glucosylceramidase 4 (519 aa).

Positions 1–24 (MILNISVSLLIFLAFYGFSSDAKS) are cleaved as a signal peptide. The Proton donor role is filled by E256. Catalysis depends on E361, which acts as the Nucleophile.

It belongs to the glycosyl hydrolase 30 family.

The enzyme catalyses a beta-D-glucosylceramide + H2O = an N-acyl-sphingoid base + D-glucose. It catalyses the reaction a beta-D-glucosyl-(1&lt;-&gt;1')-N-acylsphing-4-enine + H2O = an N-acylsphing-4-enine + D-glucose. The catalysed reaction is an N-acyl-1-beta-D-glucosyl-15-methylhexadecasphing-4-enine + H2O = an N-acyl-15-methylhexadecasphing-4-enine + D-glucose. The protein operates within lipid metabolism; sphingolipid metabolism. In terms of biological role, glucosylceramidase that catalyzes the hydrolysis of glucosylceramides into free ceramides and glucose. C.elegans contains specific sphingoid bases, which are unique or different in structure compared to the sphingoid bases found in other animals. Two examples of these distinctive compounds are: 15-methylhexadecasphinganine and 15-methylhexadecasphing-4-enine. In Caenorhabditis elegans, this protein is Putative glucosylceramidase 4 (gba-4).